The sequence spans 197 residues: Ribosomal RNA large subunit methyltransferase E (197 aa).

5 residues coordinate S-adenosyl-L-methionine: Gly-50, Trp-52, Asp-67, Asp-83, and Asp-111. Lys-151 acts as the Proton acceptor in catalysis.

This sequence belongs to the class I-like SAM-binding methyltransferase superfamily. RNA methyltransferase RlmE family.

It is found in the cytoplasm. It carries out the reaction uridine(2552) in 23S rRNA + S-adenosyl-L-methionine = 2'-O-methyluridine(2552) in 23S rRNA + S-adenosyl-L-homocysteine + H(+). Functionally, specifically methylates the uridine in position 2552 of 23S rRNA at the 2'-O position of the ribose in the fully assembled 50S ribosomal subunit. In Thermoplasma volcanium (strain ATCC 51530 / DSM 4299 / JCM 9571 / NBRC 15438 / GSS1), this protein is Ribosomal RNA large subunit methyltransferase E.